The sequence spans 151 residues: Immunity protein YezG (151 aa).

A coiled-coil region spans residues 62–90; sequence KDIFKTLLRELRELFEELRTEHRNNNDDV.

As to quaternary structure, interacts with cognate toxin YeeF but not with non-cognate toxin YobL. The interaction probably inhibits the toxic activity of YeeF. May bind with a stoichiometry of 2:2 to YeeF.

The protein localises to the cytoplasm. In terms of biological role, immunity component of one of 6 LXG toxin-immunity modules in this strain. They promote kin selection, mediate competition in biofilms, and drive spatial segregation of different strains, indicating that LXG toxins may help avoid warfare between strains in biofilms. Mediates intercellular competition during biofilm formation; disruption of the operon disadvantages the bacteria, but overexpression of the cognate immunity protein restores growth in competition with wild-type. In situ neutralizes the toxic effect of cognate toxin YeeF. Probably neutralizes the ability to inhibit growth of cognate toxin YeeF. Probably does not have immunity protein activity on other LXG toxins. This Bacillus subtilis (strain 168) protein is Immunity protein YezG (yezG).